Consider the following 493-residue polypeptide: Cobyric acid synthase (493 aa).

The GATase cobBQ-type domain occupies 246 to 440; sequence PIDIAVIKMP…IHGVFDGVVF (195 aa). Cys-326 acts as the Nucleophile in catalysis. Residue His-432 is part of the active site.

Belongs to the CobB/CobQ family. CobQ subfamily.

It functions in the pathway cofactor biosynthesis; adenosylcobalamin biosynthesis. Its function is as follows. Catalyzes amidations at positions B, D, E, and G on adenosylcobyrinic A,C-diamide. NH(2) groups are provided by glutamine, and one molecule of ATP is hydrogenolyzed for each amidation. The protein is Cobyric acid synthase of Clostridium botulinum (strain Kyoto / Type A2).